We begin with the raw amino-acid sequence, 406 residues long: DNA primase DnaG (406 aa).

Residues 167–253 (DAVVIVEGRA…CVEDLSRRTV (87 aa)) form the Toprim domain. Mg(2+)-binding residues include Glu-173, Asp-215, and Asp-217. The disordered stretch occupies residues 259–309 (NKTPASAAAPIATTQSETAATDGSATPAPTPEPAPDTAPSPDSDGDDTEAA). Over residues 261–272 (TPASAAAPIATT) the composition is skewed to low complexity. Pro residues predominate over residues 286–296 (APTPEPAPDTA).

This sequence belongs to the archaeal DnaG primase family. Forms a ternary complex with MCM helicase and DNA. Mg(2+) serves as cofactor.

The enzyme catalyses ssDNA + n NTP = ssDNA/pppN(pN)n-1 hybrid + (n-1) diphosphate.. In terms of biological role, RNA polymerase that catalyzes the synthesis of short RNA molecules used as primers for DNA polymerase during DNA replication. This chain is DNA primase DnaG, found in Halobacterium salinarum (strain ATCC 29341 / DSM 671 / R1).